The primary structure comprises 252 residues: tRNA pseudouridine synthase A (252 aa).

Residue Asp52 is the Nucleophile of the active site. Position 111 (Tyr111) interacts with substrate.

The protein belongs to the tRNA pseudouridine synthase TruA family. As to quaternary structure, homodimer.

The catalysed reaction is uridine(38/39/40) in tRNA = pseudouridine(38/39/40) in tRNA. Its function is as follows. Formation of pseudouridine at positions 38, 39 and 40 in the anticodon stem and loop of transfer RNAs. The sequence is that of tRNA pseudouridine synthase A from Parabacteroides distasonis (strain ATCC 8503 / DSM 20701 / CIP 104284 / JCM 5825 / NCTC 11152).